Reading from the N-terminus, the 59-residue chain is MEKMNNIAGITPENELDEMFDDSVVGAVGYTTYWGILPLVTKNPQICPVSENTVKCRLL.

A propeptide spans 1-27 (MEKMNNIAGITPENELDEMFDDSVVGA) (cleaved by FlvT). Thr-31 and Thr-32 each carry 2,3-didehydrobutyrine; by FlvM2. 2 cross-links (beta-methyllanthionine (Thr-Cys); by FlvM2) span residues 41 to 47 (TKNPQIC) and 53 to 56 (TVKC).

Contains DL-beta-methyllanthionine, when coepressed in E.coli with the flavecin synthetase FlvM2.

The protein resides in the secreted. Lanthionine-containing peptide that does probably not show antibacterial activity, since its analog [+7]Flvbeta.f does not show antibacterial activity against M.luteus. Also does not show antibiotic activity when tested with [Del2]Flvalpha.a, an analog of Flvalpha.a, which is encoded by the same operon than Flvbeta.f. The bactericidal activity of lantibiotics is based on depolarization of energized bacterial cytoplasmic membranes, initiated by the formation of aqueous transmembrane pores. This Ruminococcus flavefaciens protein is Lantipeptide Flvbeta.f.